The chain runs to 89 residues: Acylphosphatase (89 aa).

Residues 4–89 (SRRFLVSGTV…EQPPEGFRVL (86 aa)) enclose the Acylphosphatase-like domain. Active-site residues include Arg19 and Asn37.

The protein belongs to the acylphosphatase family.

It carries out the reaction an acyl phosphate + H2O = a carboxylate + phosphate + H(+). The chain is Acylphosphatase (acyP) from Alkalilimnicola ehrlichii (strain ATCC BAA-1101 / DSM 17681 / MLHE-1).